Consider the following 259-residue polypeptide: Pyrroloquinoline-quinone synthase (259 aa).

This sequence belongs to the PqqC family.

It catalyses the reaction 6-(2-amino-2-carboxyethyl)-7,8-dioxo-1,2,3,4,7,8-hexahydroquinoline-2,4-dicarboxylate + 3 O2 = pyrroloquinoline quinone + 2 H2O2 + 2 H2O + H(+). Its pathway is cofactor biosynthesis; pyrroloquinoline quinone biosynthesis. Functionally, ring cyclization and eight-electron oxidation of 3a-(2-amino-2-carboxyethyl)-4,5-dioxo-4,5,6,7,8,9-hexahydroquinoline-7,9-dicarboxylic-acid to PQQ. The chain is Pyrroloquinoline-quinone synthase from Bradyrhizobium sp. (strain ORS 278).